The following is a 721-amino-acid chain: Glycine--tRNA ligase beta subunit (721 aa).

This sequence belongs to the class-II aminoacyl-tRNA synthetase family. In terms of assembly, tetramer of two alpha and two beta subunits.

Its subcellular location is the cytoplasm. The catalysed reaction is tRNA(Gly) + glycine + ATP = glycyl-tRNA(Gly) + AMP + diphosphate. This Sinorhizobium medicae (strain WSM419) (Ensifer medicae) protein is Glycine--tRNA ligase beta subunit.